We begin with the raw amino-acid sequence, 288 residues long: Eukaryotic translation initiation factor 3 subunit G (288 aa).

Disordered stretches follow at residues 1–33 (MSKL…NKDG) and 156–197 (DEPT…GGER). An RRM domain is found at 208 to 286 (ATLRVTNVSE…LILRVEFAKR (79 aa)).

This sequence belongs to the eIF-3 subunit G family. As to quaternary structure, component of the eukaryotic translation initiation factor 3 (eIF-3) complex.

Its subcellular location is the cytoplasm. Functionally, RNA-binding component of the eukaryotic translation initiation factor 3 (eIF-3) complex, which is involved in protein synthesis of a specialized repertoire of mRNAs and, together with other initiation factors, stimulates binding of mRNA and methionyl-tRNAi to the 40S ribosome. The eIF-3 complex specifically targets and initiates translation of a subset of mRNAs involved in cell proliferation. This subunit can bind 18S rRNA. In Aspergillus niger (strain ATCC MYA-4892 / CBS 513.88 / FGSC A1513), this protein is Eukaryotic translation initiation factor 3 subunit G (tif35).